Consider the following 502-residue polypeptide: Mannitol 2-dehydrogenase (502 aa).

Residue 37–48 (IVHIGVGGFHRA) coordinates NAD(+).

Belongs to the mannitol dehydrogenase family. In terms of assembly, monomer.

It catalyses the reaction D-mannitol + NAD(+) = D-fructose + NADH + H(+). Catalyzes the NAD(H)-dependent interconversion of D-fructose and D-mannitol in the mannitol metabolic pathway. The chain is Mannitol 2-dehydrogenase from Aspergillus clavatus (strain ATCC 1007 / CBS 513.65 / DSM 816 / NCTC 3887 / NRRL 1 / QM 1276 / 107).